We begin with the raw amino-acid sequence, 193 residues long: Ion-translocating oxidoreductase complex subunit A (193 aa).

6 consecutive transmembrane segments (helical) span residues 5–25 (LLLFVGTVLVNNFVLVKFLGL), 47–67 (FVMTLASICAWLIDTWILIPL), 72–92 (LRTMAFILVIAVVVQFTEMVV), 102–122 (LLGIFLPLITTNCAVLGVALL), 134–154 (ALYGFSAAVGFSLVMVLFAAI), and 171–191 (AIALITAGLMSLAFMGFSGLV).

This sequence belongs to the NqrDE/RnfAE family. In terms of assembly, the complex is composed of six subunits: RsxA, RsxB, RsxC, RsxD, RsxE and RsxG.

Its subcellular location is the cell inner membrane. Functionally, part of a membrane-bound complex that couples electron transfer with translocation of ions across the membrane. Required to maintain the reduced state of SoxR. This is Ion-translocating oxidoreductase complex subunit A from Escherichia coli O45:K1 (strain S88 / ExPEC).